Reading from the N-terminus, the 115-residue chain is Large ribosomal subunit protein bL20 (115 aa).

This sequence belongs to the bacterial ribosomal protein bL20 family.

Functionally, binds directly to 23S ribosomal RNA and is necessary for the in vitro assembly process of the 50S ribosomal subunit. It is not involved in the protein synthesizing functions of that subunit. The chain is Large ribosomal subunit protein bL20 from Chlorobaculum parvum (strain DSM 263 / NCIMB 8327) (Chlorobium vibrioforme subsp. thiosulfatophilum).